The sequence spans 428 residues: Kynureninase (428 aa).

Residues Thr104, Thr105, 132-135, Asp213, His216, and Tyr238 each bind pyridoxal 5'-phosphate; that span reads FPSD. Lys239 bears the N6-(pyridoxal phosphate)lysine mark. 2 residues coordinate pyridoxal 5'-phosphate: Trp267 and Thr295.

Belongs to the kynureninase family. Homodimer. Pyridoxal 5'-phosphate serves as cofactor.

The catalysed reaction is L-kynurenine + H2O = anthranilate + L-alanine + H(+). It catalyses the reaction 3-hydroxy-L-kynurenine + H2O = 3-hydroxyanthranilate + L-alanine + H(+). Its pathway is amino-acid degradation; L-kynurenine degradation; L-alanine and anthranilate from L-kynurenine: step 1/1. It functions in the pathway cofactor biosynthesis; NAD(+) biosynthesis; quinolinate from L-kynurenine: step 2/3. In terms of biological role, catalyzes the cleavage of L-kynurenine (L-Kyn) and L-3-hydroxykynurenine (L-3OHKyn) into anthranilic acid (AA) and 3-hydroxyanthranilic acid (3-OHAA), respectively. This is Kynureninase from Bacillus cereus (strain ATCC 10987 / NRS 248).